A 501-amino-acid chain; its full sequence is ATP synthase subunit alpha (501 aa).

Residue 169–176 (GDRQTGKT) participates in ATP binding.

The protein belongs to the ATPase alpha/beta chains family. In terms of assembly, F-type ATPases have 2 components, CF(1) - the catalytic core - and CF(0) - the membrane proton channel. CF(1) has five subunits: alpha(3), beta(3), gamma(1), delta(1), epsilon(1). CF(0) has three main subunits: a(1), b(2) and c(9-12). The alpha and beta chains form an alternating ring which encloses part of the gamma chain. CF(1) is attached to CF(0) by a central stalk formed by the gamma and epsilon chains, while a peripheral stalk is formed by the delta and b chains.

It localises to the cell membrane. The catalysed reaction is ATP + H2O + 4 H(+)(in) = ADP + phosphate + 5 H(+)(out). In terms of biological role, produces ATP from ADP in the presence of a proton gradient across the membrane. The alpha chain is a regulatory subunit. This Streptococcus pneumoniae (strain 70585) protein is ATP synthase subunit alpha.